Consider the following 931-residue polypeptide: Envelope glycoprotein B (931 aa).

A signal peptide spans 1 to 71 (MSPCGYYSKW…FSMFVTAVVS (71 aa)). Over 72–786 (VSPSSFYESL…HGFTTFLSNP (715 aa)) the chain is Virion surface. Disulfide bonds link Cys-122–Cys-584, Cys-139–Cys-540, Cys-213–Cys-277, Cys-369–Cys-417, and Cys-608–Cys-645. An N-linked (GlcNAc...) asparagine; by host glycan is attached at Asn-147. The involved in fusion and/or binding to host membrane stretch occupies residues 179-185 (AWAGSSY). Asn-257 is a glycosylation site (N-linked (GlcNAc...) asparagine; by host). The tract at residues 264-271 (GTPGTYRT) is involved in fusion and/or binding to host membrane. N-linked (GlcNAc...) asparagine; by host glycosylation is found at Asn-435, Asn-503, Asn-620, and Asn-686. Hydrophobic membrane proximal region regions lie at residues 731–784 (IDKV…TFLS) and 764–784 (VVLGATGALLSTVHGFTTFLS). Residues 787–807 (FGALAVGLLVLAGLVAAFFAY) form a helical membrane-spanning segment. Residues 808 to 931 (RYVLKLKTSP…RVRTENVTGV (124 aa)) are Intravirion-facing. The short motif at 881–884 (YMTL) is the Golgi targeting element. Positions 920-923 (YSRV) match the Internalization motif motif.

The protein belongs to the herpesviridae glycoprotein B family. In terms of assembly, homotrimer; disulfide-linked. Binds to heparan sulfate proteoglycans. Interacts with gH/gL heterodimer. A proteolytic cleavage by host furin generates two subunits that remain linked by disulfide bonds.

Its subcellular location is the virion membrane. The protein resides in the host cell membrane. It localises to the host endosome membrane. It is found in the host Golgi apparatus membrane. In terms of biological role, envelope glycoprotein that forms spikes at the surface of virion envelope. Essential for the initial attachment to heparan sulfate moieties of the host cell surface proteoglycans. Involved in fusion of viral and cellular membranes leading to virus entry into the host cell. Following initial binding to its host receptors, membrane fusion is mediated by the fusion machinery composed at least of gB and the heterodimer gH/gL. May be involved in the fusion between the virion envelope and the outer nuclear membrane during virion egress. This is Envelope glycoprotein B from Varicella-zoster virus (strain Oka vaccine) (HHV-3).